Consider the following 227-residue polypeptide: Ribose-5-phosphate isomerase A (227 aa).

Substrate contacts are provided by residues 26-29 (TGST), 82-85 (DGAD), and 95-98 (KGGG). The active-site Proton acceptor is glutamate 104. Position 122 (lysine 122) interacts with substrate.

The protein belongs to the ribose 5-phosphate isomerase family. In terms of assembly, homodimer.

It catalyses the reaction aldehydo-D-ribose 5-phosphate = D-ribulose 5-phosphate. It functions in the pathway carbohydrate degradation; pentose phosphate pathway; D-ribose 5-phosphate from D-ribulose 5-phosphate (non-oxidative stage): step 1/1. Catalyzes the reversible conversion of ribose-5-phosphate to ribulose 5-phosphate. This Streptococcus pneumoniae serotype 4 (strain ATCC BAA-334 / TIGR4) protein is Ribose-5-phosphate isomerase A.